A 269-amino-acid chain; its full sequence is Ribosomal RNA small subunit methyltransferase A (269 aa).

His-11, Leu-13, Gly-38, Glu-59, Asp-84, and Asn-105 together coordinate S-adenosyl-L-methionine.

The protein belongs to the class I-like SAM-binding methyltransferase superfamily. rRNA adenine N(6)-methyltransferase family. RsmA subfamily.

It is found in the cytoplasm. It carries out the reaction adenosine(1518)/adenosine(1519) in 16S rRNA + 4 S-adenosyl-L-methionine = N(6)-dimethyladenosine(1518)/N(6)-dimethyladenosine(1519) in 16S rRNA + 4 S-adenosyl-L-homocysteine + 4 H(+). In terms of biological role, specifically dimethylates two adjacent adenosines (A1518 and A1519) in the loop of a conserved hairpin near the 3'-end of 16S rRNA in the 30S particle. May play a critical role in biogenesis of 30S subunits. This is Ribosomal RNA small subunit methyltransferase A from Acaryochloris marina (strain MBIC 11017).